Here is a 330-residue protein sequence, read N- to C-terminus: Protoheme IX farnesyltransferase (330 aa).

The next 9 membrane-spanning stretches (helical) occupy residues 30 to 50 (LVKP…MWMA), 58 to 78 (FFIT…INMV), 106 to 126 (LIFS…FTNL), 127 to 147 (LAAG…THWL), 155 to 175 (IVIG…ATTG), 182 to 202 (WVMF…LAIL), 228 to 248 (ILLY…PLGM), 249 to 269 (LGSF…WKAV), and 281 to 301 (AASL…AMGL).

It belongs to the UbiA prenyltransferase family. Protoheme IX farnesyltransferase subfamily.

It is found in the cell inner membrane. It carries out the reaction heme b + (2E,6E)-farnesyl diphosphate + H2O = Fe(II)-heme o + diphosphate. It functions in the pathway porphyrin-containing compound metabolism; heme O biosynthesis; heme O from protoheme: step 1/1. In terms of biological role, converts heme B (protoheme IX) to heme O by substitution of the vinyl group on carbon 2 of heme B porphyrin ring with a hydroxyethyl farnesyl side group. This is Protoheme IX farnesyltransferase from Synechococcus sp. (strain JA-2-3B'a(2-13)) (Cyanobacteria bacterium Yellowstone B-Prime).